The chain runs to 160 residues: Nucleotide-binding protein BAV0791 (160 aa).

The protein belongs to the YajQ family.

Nucleotide-binding protein. The sequence is that of Nucleotide-binding protein BAV0791 from Bordetella avium (strain 197N).